Here is a 697-residue protein sequence, read N- to C-terminus: Elongation factor G 1 (697 aa).

The tr-type G domain maps to 8–283; the sequence is ERYRNFGIMA…AVVDFLPSPV (276 aa). GTP-binding positions include 17-24, 81-85, and 135-138; these read AHIDAGKT, DTPGH, and NKMD.

The protein belongs to the TRAFAC class translation factor GTPase superfamily. Classic translation factor GTPase family. EF-G/EF-2 subfamily.

It localises to the cytoplasm. In terms of biological role, catalyzes the GTP-dependent ribosomal translocation step during translation elongation. During this step, the ribosome changes from the pre-translocational (PRE) to the post-translocational (POST) state as the newly formed A-site-bound peptidyl-tRNA and P-site-bound deacylated tRNA move to the P and E sites, respectively. Catalyzes the coordinated movement of the two tRNA molecules, the mRNA and conformational changes in the ribosome. In Anaeromyxobacter dehalogenans (strain 2CP-C), this protein is Elongation factor G 1.